The following is a 162-amino-acid chain: Peptidyl-prolyl cis-trans isomerase-like 1 (162 aa).

The region spanning 1–155 (MTTNIVLETT…EEVKIVKARV (155 aa)) is the PPIase cyclophilin-type domain.

This sequence belongs to the cyclophilin-type PPIase family. PPIL1 subfamily.

It carries out the reaction [protein]-peptidylproline (omega=180) = [protein]-peptidylproline (omega=0). PPIases accelerate the folding of proteins. It catalyzes the cis-trans isomerization of proline imidic peptide bonds in oligopeptides. The sequence is that of Peptidyl-prolyl cis-trans isomerase-like 1 (CYP1) from Gibberella zeae (strain ATCC MYA-4620 / CBS 123657 / FGSC 9075 / NRRL 31084 / PH-1) (Wheat head blight fungus).